Consider the following 334-residue polypeptide: Serpentine receptor class alpha-11 (334 aa).

The Extracellular segment spans residues 1 to 23 (MTTNNPVCASDAHMEMYSSKLYT). The helical transmembrane segment at 24-44 (SALFLNLIIATTSMILTGFAI) threads the bilayer. At 45-57 (QKLFMESIINIST) the chain is on the cytoplasmic side. Residues 58-80 (RMFLFCGLMCCSLHQTAYIVLRI) form a helical membrane-spanning segment. At 81 to 105 (QVIYQVFFKLSEPCNLYYPAIDCKY) the chain is on the extracellular side. Residues 106–126 (VTFSLVAGNTGMIFIQSAMTI) traverse the membrane as a helical segment. Residues 127 to 145 (DRIFATIFPKLWPKLKYWP) are Cytoplasmic-facing. A helical transmembrane segment spans residues 146-166 (GVVLSILMIACNYANVQIIFW). At 167-191 (GDPLTEYVPTCGQFPSKSVNRFQTF) the chain is on the extracellular side. A helical transmembrane segment spans residues 192-212 (LAIALYMSIAHMVINVIILYI). Residues 213 to 239 (NVLQDRQQSKSFNVNQRYQSREALKSS) are Cytoplasmic-facing. A helical transmembrane segment spans residues 240-260 (QAIFFLSMSQFFACLIYSVFT). Topologically, residues 261–277 (KVFLEFQLNLSPLQSGL) are extracellular. The chain crosses the membrane as a helical span at residues 278–298 (VLALSYTTPYACIAIPSLIIF). At 299-334 (TFRFIKNQRLRNINELRSQTETGDECMRKIAKIWEK) the chain is on the cytoplasmic side.

This sequence belongs to the nematode receptor-like protein sra family. In terms of tissue distribution, expressed in interneurons AIY and AVB in L1 larvae. In adults, strong expression is seen in AIY and AIA but only weak expression in AVB.

It is found in the membrane. In terms of biological role, a G protein-coupled receptor required for olfactory imprinting a requisite in ordorant response such as benzaldehyde and isoamylalcohol. This Caenorhabditis elegans protein is Serpentine receptor class alpha-11 (sra-11).